The following is a 146-amino-acid chain: Snake venom vascular endothelial growth factor toxin TfsvVEGF (146 aa).

The signal sequence occupies residues 1–24 (MAAYLLAVAILFCIQGWPSGTVQG). At Gln25 the chain carries Pyrrolidone carboxylic acid. Cystine bridges form between Cys38/Cys80, Cys69/Cys115, and Cys73/Cys117. The span at 118 to 139 (RPRSPGDVNNGKDKRNPEEGGP) shows a compositional bias: basic and acidic residues. Residues 118–146 (RPRSPGDVNNGKDKRNPEEGGPRARFPFV) are disordered.

This sequence belongs to the PDGF/VEGF growth factor family. Snake venom VEGF subfamily. In terms of assembly, homodimer; disulfide-linked. Interacts with VEGF receptor-1 (FLT1) with a high affinity, whereas it binds to VEGF receptor-2 (KDR) with a low affinity. Does not bind VEGF receptor-3 (FLT4). Expressed by the venom gland.

The protein resides in the secreted. In terms of biological role, snake venom VEGFs may contribute to venom dispersion and prey subjugation by inducing vascular permeability and hypotension. This protein strongly increases vascular permeability, and weakly stimulates angiogenesis. Interacts with VEGF receptor-1 (FLT1) with a high affinity, whereas it binds to VEGF receptor-2 (KDR) with a low affinity. Stimulates autophosphorylation of VEGF receptor-1 (VEGFR-1/FLT1), and VEGF receptor-2 (VEGFR-2/KDR). In Protobothrops flavoviridis (Habu), this protein is Snake venom vascular endothelial growth factor toxin TfsvVEGF.